We begin with the raw amino-acid sequence, 327 residues long: Malate dehydrogenase (327 aa).

Gly11–Gly17 lines the NAD(+) pocket. 2 residues coordinate substrate: Arg92 and Arg98. NAD(+) is bound by residues Asn105, Gln112, and Val129–Asn131. Residues Asn131 and Arg162 each coordinate substrate. The active-site Proton acceptor is the His187.

The protein belongs to the LDH/MDH superfamily. MDH type 2 family.

The catalysed reaction is (S)-malate + NAD(+) = oxaloacetate + NADH + H(+). Functionally, catalyzes the reversible oxidation of malate to oxaloacetate. The chain is Malate dehydrogenase from Thermus thermophilus (strain ATCC BAA-163 / DSM 7039 / HB27).